The sequence spans 223 residues: Ribose-5-phosphate isomerase A (223 aa).

Residues 28 to 31 (TGST), 81 to 84 (DGAD), and 94 to 97 (KGGG) contribute to the substrate site. The Proton acceptor role is filled by E103. K121 serves as a coordination point for substrate.

It belongs to the ribose 5-phosphate isomerase family. In terms of assembly, homodimer.

The enzyme catalyses aldehydo-D-ribose 5-phosphate = D-ribulose 5-phosphate. It participates in carbohydrate degradation; pentose phosphate pathway; D-ribose 5-phosphate from D-ribulose 5-phosphate (non-oxidative stage): step 1/1. Its function is as follows. Catalyzes the reversible conversion of ribose-5-phosphate to ribulose 5-phosphate. The protein is Ribose-5-phosphate isomerase A of Herminiimonas arsenicoxydans.